Reading from the N-terminus, the 206-residue chain is Large ribosomal subunit protein uL4 (206 aa).

Residues 47–94 (NRAQKGRAEVSKSTRKPWRQKGTGRARAGMASSPLWRGGGRVFPNSPE) are disordered. Positions 59-70 (STRKPWRQKGTG) are enriched in basic residues.

It belongs to the universal ribosomal protein uL4 family. In terms of assembly, part of the 50S ribosomal subunit.

Functionally, one of the primary rRNA binding proteins, this protein initially binds near the 5'-end of the 23S rRNA. It is important during the early stages of 50S assembly. It makes multiple contacts with different domains of the 23S rRNA in the assembled 50S subunit and ribosome. In terms of biological role, forms part of the polypeptide exit tunnel. The chain is Large ribosomal subunit protein uL4 from Aromatoleum aromaticum (strain DSM 19018 / LMG 30748 / EbN1) (Azoarcus sp. (strain EbN1)).